A 290-amino-acid chain; its full sequence is Light-independent protochlorophyllide reductase iron-sulfur ATP-binding protein (290 aa).

ATP-binding positions include 10-15 (GIGKST) and Lys-39. Ser-14 serves as a coordination point for Mg(2+). [4Fe-4S] cluster is bound by residues Cys-95 and Cys-129. 180–181 (NR) is an ATP binding site.

It belongs to the NifH/BchL/ChlL family. As to quaternary structure, homodimer. Protochlorophyllide reductase is composed of three subunits; ChlL, ChlN and ChlB. It depends on [4Fe-4S] cluster as a cofactor.

The protein resides in the plastid. It is found in the chloroplast. It catalyses the reaction chlorophyllide a + oxidized 2[4Fe-4S]-[ferredoxin] + 2 ADP + 2 phosphate = protochlorophyllide a + reduced 2[4Fe-4S]-[ferredoxin] + 2 ATP + 2 H2O. It functions in the pathway porphyrin-containing compound metabolism; chlorophyll biosynthesis (light-independent). Its function is as follows. Component of the dark-operative protochlorophyllide reductase (DPOR) that uses Mg-ATP and reduced ferredoxin to reduce ring D of protochlorophyllide (Pchlide) to form chlorophyllide a (Chlide). This reaction is light-independent. The L component serves as a unique electron donor to the NB-component of the complex, and binds Mg-ATP. The protein is Light-independent protochlorophyllide reductase iron-sulfur ATP-binding protein of Zygnema circumcarinatum (Green alga).